A 130-amino-acid chain; its full sequence is Small ribosomal subunit protein uS9 (130 aa).

The protein belongs to the universal ribosomal protein uS9 family.

The polypeptide is Small ribosomal subunit protein uS9 (Burkholderia pseudomallei (strain K96243)).